We begin with the raw amino-acid sequence, 389 residues long: Protein OSCP1 (389 aa).

Expressed predominantly in testis, also found in placenta and to a lesser extent in thymus and small intestine; abundantly expressed in tumor-derived cell lines. Ubiquitously expressed.

Its subcellular location is the basal cell membrane. In terms of biological role, may be involved in drug clearance in the placenta. The polypeptide is Protein OSCP1 (OSCP1) (Homo sapiens (Human)).